The following is a 568-amino-acid chain: Light-independent protochlorophyllide reductase subunit B (568 aa).

Residue Asp36 coordinates [4Fe-4S] cluster. Asp293 acts as the Proton donor in catalysis. 437–438 provides a ligand contact to substrate; that stretch reads GM. The disordered stretch occupies residues 476–517; that stretch reads ANGHPEAGVSVGAAEPSAAPSRSVVTEESNRATTPSSSTVHP. Residues 498-515 show a composition bias toward polar residues; that stretch reads SVVTEESNRATTPSSSTV.

The protein belongs to the ChlB/BchB/BchZ family. In terms of assembly, protochlorophyllide reductase is composed of three subunits; BchL, BchN and BchB. Forms a heterotetramer of two BchB and two BchN subunits. [4Fe-4S] cluster is required as a cofactor.

It catalyses the reaction chlorophyllide a + oxidized 2[4Fe-4S]-[ferredoxin] + 2 ADP + 2 phosphate = protochlorophyllide a + reduced 2[4Fe-4S]-[ferredoxin] + 2 ATP + 2 H2O. The protein operates within porphyrin-containing compound metabolism; bacteriochlorophyll biosynthesis (light-independent). Its function is as follows. Component of the dark-operative protochlorophyllide reductase (DPOR) that uses Mg-ATP and reduced ferredoxin to reduce ring D of protochlorophyllide (Pchlide) to form chlorophyllide a (Chlide). This reaction is light-independent. The NB-protein (BchN-BchB) is the catalytic component of the complex. The chain is Light-independent protochlorophyllide reductase subunit B from Roseiflexus sp. (strain RS-1).